The sequence spans 417 residues: UDP-N-acetylglucosamine 1-carboxyvinyltransferase (417 aa).

A phosphoenolpyruvate-binding site is contributed by 22 to 23; that stretch reads KN. A UDP-N-acetyl-alpha-D-glucosamine-binding site is contributed by arginine 93. Cysteine 117 acts as the Proton donor in catalysis. At cysteine 117 the chain carries 2-(S-cysteinyl)pyruvic acid O-phosphothioketal. UDP-N-acetyl-alpha-D-glucosamine is bound by residues 122-126, aspartate 304, and isoleucine 326; that span reads RPVDQ.

This sequence belongs to the EPSP synthase family. MurA subfamily.

It localises to the cytoplasm. The enzyme catalyses phosphoenolpyruvate + UDP-N-acetyl-alpha-D-glucosamine = UDP-N-acetyl-3-O-(1-carboxyvinyl)-alpha-D-glucosamine + phosphate. The protein operates within cell wall biogenesis; peptidoglycan biosynthesis. Its function is as follows. Cell wall formation. Adds enolpyruvyl to UDP-N-acetylglucosamine. The protein is UDP-N-acetylglucosamine 1-carboxyvinyltransferase of Neisseria meningitidis serogroup A / serotype 4A (strain DSM 15465 / Z2491).